We begin with the raw amino-acid sequence, 331 residues long: MARMYYDEDANLDLLAGKTIAIIGYGSQGHAHALNLKDSGLNVIVGLYPGSKSAEKAQAAGLTVKNVADAANVADFIMILLPDEVQKTVYKNEIEPNLQEGNTLAFAHGFNIHFGQVVPPANVDVVMVAPKGPGHLVRRTYEQGQGVPALFAVYQDASGKARDRALSYAKGIGGTRGGVLETTFREETETDLFGEQAVLCGGLSALIKAGFETLVEAGYQPELAYFECLHEVKLIVDLVVEGGLAKMRDSISNTAEYGDYTRGPRIVNEQTKAEMRKVLSEIQSGQFAREFVLENQSGKPGFTAMRRQEAEHPIEEVGKDLRAMFSWLKKV.

Positions 2–182 (ARMYYDEDAN…GGTRGGVLET (181 aa)) constitute a KARI N-terminal Rossmann domain. Residues 25–28 (YGSQ), Ser-51, Ser-53, and 83–86 (DEVQ) each bind NADP(+). The active site involves His-108. Gly-134 serves as a coordination point for NADP(+). The region spanning 183 to 328 (TFREETETDL…KDLRAMFSWL (146 aa)) is the KARI C-terminal knotted domain. Mg(2+) is bound by residues Asp-191, Glu-195, Glu-227, and Glu-231. Ser-252 provides a ligand contact to substrate.

Belongs to the ketol-acid reductoisomerase family. Mg(2+) serves as cofactor.

The enzyme catalyses (2R)-2,3-dihydroxy-3-methylbutanoate + NADP(+) = (2S)-2-acetolactate + NADPH + H(+). It carries out the reaction (2R,3R)-2,3-dihydroxy-3-methylpentanoate + NADP(+) = (S)-2-ethyl-2-hydroxy-3-oxobutanoate + NADPH + H(+). The protein operates within amino-acid biosynthesis; L-isoleucine biosynthesis; L-isoleucine from 2-oxobutanoate: step 2/4. It participates in amino-acid biosynthesis; L-valine biosynthesis; L-valine from pyruvate: step 2/4. Its function is as follows. Involved in the biosynthesis of branched-chain amino acids (BCAA). Catalyzes an alkyl-migration followed by a ketol-acid reduction of (S)-2-acetolactate (S2AL) to yield (R)-2,3-dihydroxy-isovalerate. In the isomerase reaction, S2AL is rearranged via a Mg-dependent methyl migration to produce 3-hydroxy-3-methyl-2-ketobutyrate (HMKB). In the reductase reaction, this 2-ketoacid undergoes a metal-dependent reduction by NADPH to yield (R)-2,3-dihydroxy-isovalerate. This Trichormus variabilis (strain ATCC 29413 / PCC 7937) (Anabaena variabilis) protein is Ketol-acid reductoisomerase (NADP(+)).